Consider the following 368-residue polypeptide: Ferredoxin--NADP reductase 2 (368 aa).

FAD is bound by residues aspartate 57, glutamine 65, tyrosine 70, valine 110, phenylalanine 145, aspartate 310, and threonine 351.

The protein belongs to the ferredoxin--NADP reductase type 2 family. In terms of assembly, homodimer. FAD is required as a cofactor.

It carries out the reaction 2 reduced [2Fe-2S]-[ferredoxin] + NADP(+) + H(+) = 2 oxidized [2Fe-2S]-[ferredoxin] + NADPH. The protein is Ferredoxin--NADP reductase 2 of Cupriavidus pinatubonensis (strain JMP 134 / LMG 1197) (Cupriavidus necator (strain JMP 134)).